Reading from the N-terminus, the 381-residue chain is Succinyl-diaminopimelate desuccinylase (381 aa).

Residue histidine 72 coordinates Zn(2+). Aspartate 74 is an active-site residue. Residue aspartate 105 coordinates Zn(2+). Catalysis depends on glutamate 139, which acts as the Proton acceptor. Residues glutamate 140, glutamate 168, and histidine 354 each coordinate Zn(2+).

This sequence belongs to the peptidase M20A family. DapE subfamily. In terms of assembly, homodimer. Zn(2+) serves as cofactor. Requires Co(2+) as cofactor.

The catalysed reaction is N-succinyl-(2S,6S)-2,6-diaminopimelate + H2O = (2S,6S)-2,6-diaminopimelate + succinate. It participates in amino-acid biosynthesis; L-lysine biosynthesis via DAP pathway; LL-2,6-diaminopimelate from (S)-tetrahydrodipicolinate (succinylase route): step 3/3. In terms of biological role, catalyzes the hydrolysis of N-succinyl-L,L-diaminopimelic acid (SDAP), forming succinate and LL-2,6-diaminopimelate (DAP), an intermediate involved in the bacterial biosynthesis of lysine and meso-diaminopimelic acid, an essential component of bacterial cell walls. This Shewanella sp. (strain ANA-3) protein is Succinyl-diaminopimelate desuccinylase.